Here is a 316-residue protein sequence, read N- to C-terminus: 4-hydroxy-3-methylbut-2-enyl diphosphate reductase (316 aa).

Cys-12 contacts [4Fe-4S] cluster. Residues His-41 and His-74 each coordinate (2E)-4-hydroxy-3-methylbut-2-enyl diphosphate. Residues His-41 and His-74 each contribute to the dimethylallyl diphosphate site. Isopentenyl diphosphate is bound by residues His-41 and His-74. Cys-96 is a [4Fe-4S] cluster binding site. (2E)-4-hydroxy-3-methylbut-2-enyl diphosphate is bound at residue His-124. His-124 contacts dimethylallyl diphosphate. His-124 serves as a coordination point for isopentenyl diphosphate. The active-site Proton donor is the Glu-126. Residue Thr-167 participates in (2E)-4-hydroxy-3-methylbut-2-enyl diphosphate binding. Cys-197 provides a ligand contact to [4Fe-4S] cluster. 4 residues coordinate (2E)-4-hydroxy-3-methylbut-2-enyl diphosphate: Ser-225, Ser-226, Asn-227, and Ser-269. Residues Ser-225, Ser-226, Asn-227, and Ser-269 each contribute to the dimethylallyl diphosphate site. 4 residues coordinate isopentenyl diphosphate: Ser-225, Ser-226, Asn-227, and Ser-269.

The protein belongs to the IspH family. Homodimer. Requires [4Fe-4S] cluster as cofactor.

It catalyses the reaction isopentenyl diphosphate + 2 oxidized [2Fe-2S]-[ferredoxin] + H2O = (2E)-4-hydroxy-3-methylbut-2-enyl diphosphate + 2 reduced [2Fe-2S]-[ferredoxin] + 2 H(+). The catalysed reaction is dimethylallyl diphosphate + 2 oxidized [2Fe-2S]-[ferredoxin] + H2O = (2E)-4-hydroxy-3-methylbut-2-enyl diphosphate + 2 reduced [2Fe-2S]-[ferredoxin] + 2 H(+). The protein operates within isoprenoid biosynthesis; dimethylallyl diphosphate biosynthesis; dimethylallyl diphosphate from (2E)-4-hydroxy-3-methylbutenyl diphosphate: step 1/1. It participates in isoprenoid biosynthesis; isopentenyl diphosphate biosynthesis via DXP pathway; isopentenyl diphosphate from 1-deoxy-D-xylulose 5-phosphate: step 6/6. Its function is as follows. Catalyzes the conversion of 1-hydroxy-2-methyl-2-(E)-butenyl 4-diphosphate (HMBPP) into a mixture of isopentenyl diphosphate (IPP) and dimethylallyl diphosphate (DMAPP). Acts in the terminal step of the DOXP/MEP pathway for isoprenoid precursor biosynthesis. The sequence is that of 4-hydroxy-3-methylbut-2-enyl diphosphate reductase from Escherichia coli (strain ATCC 8739 / DSM 1576 / NBRC 3972 / NCIMB 8545 / WDCM 00012 / Crooks).